A 54-amino-acid polypeptide reads, in one-letter code: U1-ctenitoxin-Pr1a (54 aa).

Intrachain disulfides connect Cys2–Cys19, Cys9–Cys25, Cys16–Cys51, Cys18–Cys39, and Cys27–Cys37.

In terms of tissue distribution, expressed by the venom gland.

Its subcellular location is the secreted. Functionally, omega-agatoxins are antagonists of voltage-gated calcium channels (Cav). Causes rapid general flaccid paralysis followed by death in 10-30 minutes when injected in mice at dose levels of 5 ug per mouse. This is U1-ctenitoxin-Pr1a from Phoneutria reidyi (Brazilian Amazonian armed spider).